The chain runs to 367 residues: DNA replication and repair protein RecF (367 aa).

Residue 30–37 participates in ATP binding; it reads GNNGEGKT.

The protein belongs to the RecF family.

It is found in the cytoplasm. The RecF protein is involved in DNA metabolism; it is required for DNA replication and normal SOS inducibility. RecF binds preferentially to single-stranded, linear DNA. It also seems to bind ATP. This is DNA replication and repair protein RecF from Leptospira biflexa serovar Patoc (strain Patoc 1 / Ames).